The chain runs to 345 residues: uncharacterized protein (345 aa).

This sequence belongs to the cycloisomerase 2 family.

This is an uncharacterized protein from Staphylococcus saprophyticus subsp. saprophyticus (strain ATCC 15305 / DSM 20229 / NCIMB 8711 / NCTC 7292 / S-41).